The primary structure comprises 691 residues: MSDVIAEHAVDTSVEGDAKAALPVQSTKQFSVYEATSEELIERSMAPIKKEFLCPPPPSRSVKQNDAADVRAPQSGLVQEKKSKRQLKRERREQSTINLCPQVARTEDVDSCQYKDKCRFNHDIEAFKAQKADDIEGQCPFVASGMKCAYGLSCRFLGSHRDITGNSDDKEKSEMNFFNKETQRLLWKNKMTFTNADAKLKSLGLLGHAKKSNAAEEITAEKTQNGMNGTQATEVAVDSAVSSEHTSEMIQDVDIPGPLETEEVRPMKKAKSEDQKNSKTGDVGGVYDGVKLEEETKKNGYPTSKANVEDEDSIKIVETDSSLKLHPREKKKLIDFRDKLYLAPLTTVGNLPFRRLCKVLGADVTCGEMAMCTNLLQGQASEWALLRRHSSEDLFGVQICGSYPDTVSRVVELIDRECTVDFIDINMGCPIDMVVNKSAGSALLNKPLRMKNIVEVSSSIVETPITIKVRTAFFEGKNRIDSLIADIGNWGATAVTIHGRSRQQRYSKSADWDYIYQCTKNATTNLQVIGNGDVYSYLDWNKHKSDCPELSSCMIARGALIKPWIFTEIKEQRHWDITSGERLNIMKDFVRFGLQHWGSDTKGVETTRHFLLEWLSYTFRYIPVGLLDVIPQQINWRPPSYFGRDDLETLMMSESAGDWVRISEMLLGKVPEGFTFAPKHKSNAYDRAENG.

Ser2 is modified (N-acetylserine). Residues 55–94 form a disordered region; the sequence is PPPPSRSVKQNDAADVRAPQSGLVQEKKSKRQLKRERREQ. 2 C3H1-type zinc fingers span residues 94 to 125 and 138 to 163; these read QSTINLCPQVARTEDVDSCQYKDKCRFNHDIE and QCPFVASGMKCAYGLSCRFLGSHRDI. Positions 259–286 are disordered; the sequence is LETEEVRPMKKAKSEDQKNSKTGDVGGV. Residues 262–279 are compositionally biased toward basic and acidic residues; it reads EEVRPMKKAKSEDQKNSK. FMN contacts are provided by residues 344–346 and Gln398; that span reads PLT. Residue Cys429 is the Proton donor of the active site. Residues Lys468, His498, 531–533, and 556–557 contribute to the FMN site; these read NGD and AR.

The protein belongs to the Dus family. Dus3 subfamily. It depends on FMN as a cofactor.

It catalyses the reaction 5,6-dihydrouridine(47) in tRNA + NAD(+) = uridine(47) in tRNA + NADH + H(+). It carries out the reaction 5,6-dihydrouridine(47) in tRNA + NADP(+) = uridine(47) in tRNA + NADPH + H(+). The enzyme catalyses a 5,6-dihydrouridine in mRNA + NAD(+) = a uridine in mRNA + NADH + H(+). The catalysed reaction is a 5,6-dihydrouridine in mRNA + NADP(+) = a uridine in mRNA + NADPH + H(+). Its function is as follows. Catalyzes the synthesis of dihydrouridine, a modified base found in the D-loop of most tRNAs. Specifically modifies U47 in cytoplasmic tRNAs. Catalyzes the synthesis of dihydrouridine in some mRNAs, thereby affecting their translation. This chain is tRNA-dihydrouridine(47) synthase [NAD(P)(+)]-like, found in Arabidopsis thaliana (Mouse-ear cress).